The chain runs to 78 residues: Large ribosomal subunit protein bL28 (78 aa).

A disordered region spans residues 1 to 26 (MARVCQVTGKRPMSGHNVSHANNKTK).

This sequence belongs to the bacterial ribosomal protein bL28 family.

This Nitrosomonas europaea (strain ATCC 19718 / CIP 103999 / KCTC 2705 / NBRC 14298) protein is Large ribosomal subunit protein bL28.